A 396-amino-acid polypeptide reads, in one-letter code: MPRVKAAQAGRQSSAKRHLAEQFAVGEIITDMAKKEWKVGLPIGQGGFGCIYLADMNSSESVGSDAPCVVKVEPSDNGPLFTELKFYQRAAKPEQIQKWIRTRKLKYLGVPKYWGSGLHDKNGKSYRFMIMDRFGSDLQKIYEANAKRFSRKTVLQLSLRILDILEYIHEHEYVHGDIKASNLLLNYKNPDQVYLVDYGLAYRYCPEGVHKEYKEDPKRCHDGTIEFTSIDAHNGVAPSRRGDLEILGYCMIQWLTGHLPWEDNLKDPKYVRDSKIRYRENIASLMDKCFPEKNKPGEIAKYMETVKLLDYTEKPLYENLRDILLQGLKAIGSKDDGKLDLSVVENGGLKAKTITKKRKKEIEESKEPGVEDTEWSNTQTEEAIQTRSRTRKRVQK.

Residues 37 to 317 (WKVGLPIGQG…LLDYTEKPLY (281 aa)) form the Protein kinase domain. ATP-binding positions include 43 to 51 (IGQGGFGCI) and Lys-71. A Glycyl lysine isopeptide (Lys-Gly) (interchain with G-Cter in SUMO2) cross-link involves residue Lys-71. The active-site Proton acceptor is Asp-177. The residue at position 342 (Ser-342) is a Phosphoserine; by PLK3. The disordered stretch occupies residues 354 to 396 (ITKKRKKEIEESKEPGVEDTEWSNTQTEEAIQTRSRTRKRVQK). Thr-355 carries the phosphothreonine; by autocatalysis modification. Over residues 360 to 369 (KEIEESKEPG) the composition is skewed to basic and acidic residues. Over residues 375 to 387 (WSNTQTEEAIQTR) the composition is skewed to polar residues. At Ser-376 the chain carries Phosphoserine. Thr-378 is subject to Phosphothreonine. Positions 387 to 393 (RSRTRKR) are required for interaction with the nucleosome.

This sequence belongs to the protein kinase superfamily. CK1 Ser/Thr protein kinase family. VRK subfamily. As to quaternary structure, interacts with HDAC1, KAT2B, SETDB1, KDM3A and KDM4A. Associates with the nucleosome through interactions with nucleosome DNA, histone H2A and histone H2B; the interaction with H2A and H2B is mediated by the nucleosome acidic patch, a cluster of negatively charged residues of H2A and H2B forming a cleft within the nucleosome core. In terms of assembly, (Microbial infection) Interacts with vaccinia protein B12; this interaction inhibits the repressive activity of the vaccinia virus B12 pseudokinase on viral replication factory formation. Autophosphorylated at various serine and threonine residues. Autophosphorylation does not impair its ability to phosphorylate p53/TP53. Phosphorylation by PLK3 leads to induction of Golgi fragmentation during mitosis. Widely expressed. Highly expressed in fetal liver, testis and thymus.

The protein localises to the nucleus. It is found in the cytoplasm. It localises to the cajal body. It carries out the reaction L-seryl-[protein] + ATP = O-phospho-L-seryl-[protein] + ADP + H(+). The catalysed reaction is L-threonyl-[protein] + ATP = O-phospho-L-threonyl-[protein] + ADP + H(+). With respect to regulation, active in presence of Mn(2+), Mg(2+) and Zn(2+), but is not functional with Ca(2+) or Cu(2+). Has a higher affinity for Mn(2+) than for Mg(2+). RAN inhibits its autophosphorylation and its ability to phosphorylate histone H3. In terms of biological role, serine/threonine kinase involved in the regulation of key cellular processes including the cell cycle, nuclear condensation, transcription regulation, and DNA damage response. Controls chromatin organization and remodeling by mediating phosphorylation of histone H3 on 'Thr-4' and histone H2AX (H2aXT4ph). It also phosphorylates KAT5 in response to DNA damage, promoting KAT5 association with chromatin and histone acetyltransferase activity. Is involved in the regulation of cell cycle progression of neural progenitors, and is required for proper cortical neuronal migration. Is involved in neurite elongation and branching in motor neurons, and has an essential role in Cajal bodies assembly, acting through COIL phosphorylation and the control of coilin degradation. Involved in Golgi disassembly during the cell cycle: following phosphorylation by PLK3 during mitosis, it is required to induce Golgi fragmentation. Phosphorylates BANF1: disrupts its ability to bind DNA, reduces its binding to LEM domain-containing proteins and causes its relocalization from the nucleus to the cytoplasm. Phosphorylates TP53BP1 and p53/TP53 on 'Thr-18', preventing the interaction between p53/TP53 and MDM2. Phosphorylates ATF2 which activates its transcriptional activity. Phosphorylates JUN. The sequence is that of Serine/threonine-protein kinase VRK1 from Homo sapiens (Human).